A 393-amino-acid polypeptide reads, in one-letter code: Formate-dependent phosphoribosylglycinamide formyltransferase (393 aa).

N(1)-(5-phospho-beta-D-ribosyl)glycinamide contacts are provided by residues 22–23 and glutamate 82; that span reads EL. Residues arginine 114, lysine 155, 160–165, 195–198, and glutamate 203 contribute to the ATP site; these read SSGKGQ and EGFI. An ATP-grasp domain is found at 119–308; the sequence is RLAAEELKLP…QFALHARAIL (190 aa). Mg(2+) is bound by residues glutamate 267 and glutamate 279. Residues aspartate 286, lysine 356, and 363 to 364 each bind N(1)-(5-phospho-beta-D-ribosyl)glycinamide; that span reads RR.

It belongs to the PurK/PurT family. As to quaternary structure, homodimer.

The enzyme catalyses N(1)-(5-phospho-beta-D-ribosyl)glycinamide + formate + ATP = N(2)-formyl-N(1)-(5-phospho-beta-D-ribosyl)glycinamide + ADP + phosphate + H(+). It participates in purine metabolism; IMP biosynthesis via de novo pathway; N(2)-formyl-N(1)-(5-phospho-D-ribosyl)glycinamide from N(1)-(5-phospho-D-ribosyl)glycinamide (formate route): step 1/1. Functionally, involved in the de novo purine biosynthesis. Catalyzes the transfer of formate to 5-phospho-ribosyl-glycinamide (GAR), producing 5-phospho-ribosyl-N-formylglycinamide (FGAR). Formate is provided by PurU via hydrolysis of 10-formyl-tetrahydrofolate. This Pseudomonas syringae pv. tomato (strain ATCC BAA-871 / DC3000) protein is Formate-dependent phosphoribosylglycinamide formyltransferase.